The following is an 875-amino-acid chain: Serine/threonine-protein kinase D2 (875 aa).

The tract at residues 1-33 is disordered; it reads MAAAPSHPAGLPCSPGPGSPPPPGGSDLQSLPP. Positions 14 to 24 are enriched in pro residues; it reads SPGPGSPPPPG. Phosphoserine occurs at positions 26 and 30. Tyrosine 87 carries the phosphotyrosine modification. A Phorbol-ester/DAG-type 1 zinc finger spans residues 138-188; that stretch reads PHALTVHSYRAPAFCDHCGEMLFGLVRQGLKCDGCGLNYHKRCAFSIPNNC. A phosphoserine mark is found at serine 197, serine 198, serine 200, serine 203, serine 206, serine 211, serine 212, and serine 214. The segment at 224-247 is disordered; sequence RSTTDLLPRRPPSSSSSSSSSSFY. The segment covering 236–245 has biased composition (low complexity); it reads SSSSSSSSSS. At serine 244 the chain carries Phosphoserine; by CSNK1D and CSNK1E. Serine 245 bears the Phosphoserine mark. The Phorbol-ester/DAG-type 2 zinc-finger motif lies at 265 to 315; the sequence is PHTFLIHSYTRPTVCQACKKLLKGLFRQGLQCKDCKFNCHKRCATRVPNDC. Residues 398–510 form the PH domain; it reads TTLREGWVVH…WETAIRQALM (113 aa). Tyrosine 408 is modified (phosphotyrosine). Residue tyrosine 439 is modified to Phosphotyrosine; by ABL1. A Phosphoserine modification is found at serine 519. The 257-residue stretch at 552-808 folds into the Protein kinase domain; it reads IFPDEVLGSG…VDKSLSHPWL (257 aa). ATP contacts are provided by residues 558–566 and lysine 581; that span reads LGSGQFGVV. The active-site Proton acceptor is the aspartate 675. Serine 707 carries the phosphoserine; by PKC modification. The residue at position 711 (serine 711) is a Phosphoserine. The residue at position 718 (tyrosine 718) is a Phosphotyrosine; by ABL1. The short motif at 725–727 is the Important for ABL1-mediated Tyr-718 phosphorylation element; it reads LNQ. The residue at position 873 (serine 873) is a Phosphoserine; by autocatalysis.

This sequence belongs to the protein kinase superfamily. CAMK Ser/Thr protein kinase family. PKD subfamily. In terms of assembly, interacts (via C-terminus) with LCK. Interacts (via N-terminus and zing-finger domain 1 and 2) with PRKCD in response to oxidative stress; the interaction is independent of PRKD2 tyrosine phosphorylation. Mg(2+) is required as a cofactor. Phosphorylation of Ser-873 correlates with the activation status of the kinase. Ser-707 is probably phosphorylated by PKC. Phosphorylation at Ser-244 by CSNK1D and CSNK1E promotes nuclear localization and substrate targeting. Phosphorylation at Ser-244, Ser-707 and Ser-711 is required for nuclear localization. Phosphorylated at Tyr-438 by ABL1 in response to oxidative stress. Phosphorylated at Tyr-718 by ABL1 specifically in response to oxidative stress; requires prior phosphorylation at Ser-707 or/and Ser-711.

The protein resides in the cytoplasm. It is found in the cell membrane. It localises to the golgi apparatus. Its subcellular location is the trans-Golgi network. The catalysed reaction is L-seryl-[protein] + ATP = O-phospho-L-seryl-[protein] + ADP + H(+). The enzyme catalyses L-threonyl-[protein] + ATP = O-phospho-L-threonyl-[protein] + ADP + H(+). With respect to regulation, activated by DAG and phorbol esters. Phorbol-ester/DAG-type domains bind DAG, mediating translocation to membranes. Autophosphorylation of Ser-711 and phosphorylation of Ser-707 by PKC relieves auto-inhibition by the PH domain. Catalytic activity is further increased by phosphorylation at Tyr-718 in response to oxidative stress. Its function is as follows. Serine/threonine-protein kinase that converts transient diacylglycerol (DAG) signals into prolonged physiological effects downstream of PKC, and is involved in the regulation of cell proliferation via MAPK1/3 (ERK1/2) signaling, oxidative stress-induced NF-kappa-B activation, inhibition of HDAC7 transcriptional repression, signaling downstream of T-cell antigen receptor (TCR) and cytokine production, and plays a role in Golgi membrane trafficking, angiogenesis, secretory granule release and cell adhesion. May potentiate mitogenesis induced by the neuropeptide bombesin by mediating an increase in the duration of MAPK1/3 (ERK1/2) signaling, which leads to accumulation of immediate-early gene products including FOS that stimulate cell cycle progression. In response to oxidative stress, is phosphorylated at Tyr-438 and Tyr-718 by ABL1, which leads to the activation of PRKD2 without increasing its catalytic activity, and mediates activation of NF-kappa-B. In response to the activation of the gastrin receptor CCKBR, is phosphorylated at Ser-244 by CSNK1D and CSNK1E, translocates to the nucleus, phosphorylates HDAC7, leading to nuclear export of HDAC7 and inhibition of HDAC7 transcriptional repression of NR4A1/NUR77. Upon TCR stimulation, is activated independently of ZAP70, translocates from the cytoplasm to the nucleus and is required for interleukin-2 (IL2) promoter up-regulation. During adaptive immune responses, is required in peripheral T-lymphocytes for the production of the effector cytokines IL2 and IFNG after TCR engagement and for optimal induction of antibody responses to antigens. In epithelial cells stimulated with lysophosphatidic acid (LPA), is activated through a PKC-dependent pathway and mediates LPA-stimulated interleukin-8 (IL8) secretion via a NF-kappa-B-dependent pathway. During TCR-induced T-cell activation, interacts with and is activated by the tyrosine kinase LCK, which results in the activation of the NFAT transcription factors. In the trans-Golgi network (TGN), regulates the fission of transport vesicles that are on their way to the plasma membrane and in polarized cells is involved in the transport of proteins from the TGN to the basolateral membrane. Plays an important role in endothelial cell proliferation and migration prior to angiogenesis, partly through modulation of the expression of KDR/VEGFR2 and FGFR1, two key growth factor receptors involved in angiogenesis. In secretory pathway, is required for the release of chromogranin-A (CHGA)-containing secretory granules from the TGN. Downstream of PRKCA, plays important roles in angiotensin-2-induced monocyte adhesion to endothelial cells. The sequence is that of Serine/threonine-protein kinase D2 (Prkd2) from Rattus norvegicus (Rat).